We begin with the raw amino-acid sequence, 66 residues long: UPF0337 protein spyM18_1212 (66 aa).

The protein belongs to the UPF0337 (CsbD) family.

This is UPF0337 protein spyM18_1212 from Streptococcus pyogenes serotype M18 (strain MGAS8232).